We begin with the raw amino-acid sequence, 132 residues long: Peptide methionine sulfoxide reductase MsrB (132 aa).

Residues 9-131 (DAQWRAELSP…NSASLSFHPK (123 aa)) form the MsrB domain. Zn(2+) contacts are provided by C48, C51, C97, and C100. Catalysis depends on C120, which acts as the Nucleophile.

It belongs to the MsrB Met sulfoxide reductase family. Zn(2+) serves as cofactor.

It catalyses the reaction L-methionyl-[protein] + [thioredoxin]-disulfide + H2O = L-methionyl-(R)-S-oxide-[protein] + [thioredoxin]-dithiol. The sequence is that of Peptide methionine sulfoxide reductase MsrB from Thiobacillus denitrificans (strain ATCC 25259 / T1).